The following is a 299-amino-acid chain: Ribosomal RNA small subunit methyltransferase H (299 aa).

Residues 36–38 (GGH), aspartate 55, tyrosine 82, aspartate 103, and glutamine 110 contribute to the S-adenosyl-L-methionine site. Basic and acidic residues-rich tracts occupy residues 269–282 (PVRPSEEEIRENPR) and 289–299 (RAAERIEEGGD). The interval 269-299 (PVRPSEEEIRENPRARSGRLRAAERIEEGGD) is disordered.

Belongs to the methyltransferase superfamily. RsmH family.

It localises to the cytoplasm. It catalyses the reaction cytidine(1402) in 16S rRNA + S-adenosyl-L-methionine = N(4)-methylcytidine(1402) in 16S rRNA + S-adenosyl-L-homocysteine + H(+). Specifically methylates the N4 position of cytidine in position 1402 (C1402) of 16S rRNA. The sequence is that of Ribosomal RNA small subunit methyltransferase H from Thermotoga maritima (strain ATCC 43589 / DSM 3109 / JCM 10099 / NBRC 100826 / MSB8).